Here is a 454-residue protein sequence, read N- to C-terminus: Rhizobactin siderophore biosynthesis protein RhbE (454 aa).

Residue alanine 7–proline 13 participates in FAD binding.

The protein belongs to the lysine N(6)-hydroxylase/L-ornithine N(5)-oxygenase family. FAD serves as cofactor.

It functions in the pathway siderophore biosynthesis; rhizobactin biosynthesis. In Rhizobium meliloti (strain 1021) (Ensifer meliloti), this protein is Rhizobactin siderophore biosynthesis protein RhbE (rhbE).